A 456-amino-acid polypeptide reads, in one-letter code: uncharacterized protein (456 aa).

A compositionally biased stretch (low complexity) spans 415-428 (SNSNGSSSSGNSSS). Residues 415–444 (SNSNGSSSSGNSSSIYNSHLMNDKKKNNNA) form a disordered region.

This is an uncharacterized protein from Saccharomyces cerevisiae (strain ATCC 204508 / S288c) (Baker's yeast).